Here is a 479-residue protein sequence, read N- to C-terminus: Gamma-aminobutyric acid receptor subunit rho-1 (479 aa).

The first 21 residues, 1–21 (MLAVPNMRFGIFLLWWGWVLA), serve as a signal peptide directing secretion. At 22-280 (TESRMHWPGR…LYINFTLRRH (259 aa)) the chain is on the extracellular side. The tract at residues 32–55 (EVHEMSKKGRPQRQRREVHEDAHK) is disordered. Basic and acidic residues predominate over residues 45 to 55 (QRREVHEDAHK). 4-aminobutanoate is bound at residue Arg125. An N-linked (GlcNAc...) asparagine glycan is attached at Asn140. Ser189 serves as a coordination point for 4-aminobutanoate. An intrachain disulfide couples Cys198 to Cys212. Glu217 provides a ligand contact to 4-aminobutanoate. Asn234 and Asn274 each carry an N-linked (GlcNAc...) asparagine glycan. The helical transmembrane segment at 281–301 (IFFFLLQTYFPATLMVMLSWV) threads the bilayer. The Cytoplasmic segment spans residues 302–313 (SFWIDRRAVPAR). Residues 314–334 (VPLGITTVLTMSTIITGVNAS) form a helical membrane-spanning segment. The Extracellular portion of the chain corresponds to 335–345 (MPRVSYIKAVD). The chain crosses the membrane as a helical span at residues 346-366 (IYLWVSFVFVFLSVLEYAAVN). Over 367–457 (YLTTVQERKE…MRIDTHAIDK (91 aa)) the chain is Cytoplasmic. Residues 458–478 (YSRIIFPAAYILFNLIYWSIF) form a helical membrane-spanning segment. Position 479 (Ser479) is a topological domain, extracellular.

The protein belongs to the ligand-gated ion channel (TC 1.A.9) family. Gamma-aminobutyric acid receptor (TC 1.A.9.5) subfamily. GABRR1 sub-subfamily. In terms of assembly, three rho subunits (rho-1/GBRR1, rho-2/GBRR2 and rho-3/GBRR3) coassemble either to form functional homopentamers or heteropentamers. Rho-1/GBRR1 subunits can also associate with alpha-1/GBRA1 subunits to form a functional GABAAR. Interacts with SQSTM1. In terms of tissue distribution, highly expressed in the retina. Expressed in a lesser extent in brain, lung and thymus.

The protein localises to the postsynaptic cell membrane. The protein resides in the cell membrane. The catalysed reaction is chloride(in) = chloride(out). Its activity is regulated as follows. Inhibited by TPMPA, a rho-specific antagonist, when forming a homopentamer. In contrast with other GABAARs, rho-1 GABAAR is not inhibited by bicuculline, when forming a homopentamer. Rho subunit of the pentameric ligand-gated chloride channels responsible for mediating the effects of gamma-aminobutyric acid (GABA), the major inhibitory neurotransmitter in the brain. Rho-containing GABA-gated chloride channels are a subclass of GABA(A) receptors (GABAARs) entirely composed of rho subunits, where GABA molecules bind at the rho intersubunit interfaces. When activated by GABA, rho-GABAARs selectively allow the flow of chloride anions across the cell membrane down their electrochemical gradient. Rho-1 subunits are primarily expressed in retina where rho-1-containing GABAARs may play a role in retinal neurotransmission. Rho-1 GABAARs are also involved in neuronal tonic (extrasynaptic) and phasic (synaptic) transmission in the Purkinje neurons of the cerebellum. Rho-1 GABAARs may also contribute to the regulation of glial development in the cerebellum by controlling extrasynaptic transmission. This Homo sapiens (Human) protein is Gamma-aminobutyric acid receptor subunit rho-1.